Reading from the N-terminus, the 635-residue chain is Threonine--tRNA ligase (635 aa).

In terms of domain architecture, TGS spans 1–62 (MITITLPDGS…EHDAILRIIT (62 aa)). The tract at residues 244 to 535 (DHRKIGKAQD…LIEHYAGIWP (292 aa)) is catalytic. The Zn(2+) site is built by cysteine 335, histidine 386, and histidine 512.

It belongs to the class-II aminoacyl-tRNA synthetase family. In terms of assembly, homodimer. It depends on Zn(2+) as a cofactor.

It is found in the cytoplasm. The catalysed reaction is tRNA(Thr) + L-threonine + ATP = L-threonyl-tRNA(Thr) + AMP + diphosphate + H(+). In terms of biological role, catalyzes the attachment of threonine to tRNA(Thr) in a two-step reaction: L-threonine is first activated by ATP to form Thr-AMP and then transferred to the acceptor end of tRNA(Thr). Also edits incorrectly charged L-seryl-tRNA(Thr). In Xylella fastidiosa (strain M12), this protein is Threonine--tRNA ligase.